Consider the following 159-residue polypeptide: Cytochrome c-type biogenesis protein CcmE (159 aa).

Residues 1–8 are Cytoplasmic-facing; sequence MNIRRKNR. A helical; Signal-anchor for type II membrane protein transmembrane segment spans residues 9-29; it reads LWIACAVLAGLALTITLVLYA. Topologically, residues 30–159 are periplasmic; sequence LRSNIDLFYT…PESVYKDKAS (130 aa). 2 residues coordinate heme: H130 and Y134. A disordered region spans residues 130–159; it reads HDENYTPPEVEKAMQENHRRPESVYKDKAS.

This sequence belongs to the CcmE/CycJ family.

The protein resides in the cell inner membrane. Its function is as follows. Heme chaperone required for the biogenesis of c-type cytochromes. Transiently binds heme delivered by CcmC and transfers the heme to apo-cytochromes in a process facilitated by CcmF and CcmH. This chain is Cytochrome c-type biogenesis protein CcmE, found in Citrobacter koseri (strain ATCC BAA-895 / CDC 4225-83 / SGSC4696).